The primary structure comprises 226 residues: Large ribosomal subunit protein uL1 (226 aa).

This sequence belongs to the universal ribosomal protein uL1 family. In terms of assembly, part of the 50S ribosomal subunit.

In terms of biological role, binds directly to 23S rRNA. The L1 stalk is quite mobile in the ribosome, and is involved in E site tRNA release. Its function is as follows. Protein L1 is also a translational repressor protein, it controls the translation of the L11 operon by binding to its mRNA. This Selenomonas ruminantium protein is Large ribosomal subunit protein uL1.